The sequence spans 770 residues: DEAD-box ATP-dependent RNA helicase 24 (770 aa).

Positions 1 to 106 are disordered; it reads MSKRPKLGGF…ADSDDEDDPV (106 aa). Over residues 14-26 the composition is skewed to polar residues; the sequence is RPTSYSFERSQPP. Over residues 34–43 the composition is skewed to acidic residues; that stretch reads DDPDLDDIAF. Low complexity predominate over residues 44–55; that stretch reads SDDAAAPSDAPP. Positions 219 to 247 match the Q motif motif; sequence KSFADCGFPVQLMNAIAKQGYEKPTTIQC. Residues 250–425 enclose the Helicase ATP-binding domain; the sequence is LPIVLSGRDI…REILTDPIRV (176 aa). ATP is bound at residue 263-270; sequence AKTGSGKT. The DEAD box motif lies at 373-376; sequence DEAD. Residues 436 to 599 form the Helicase C-terminal domain; it reads DIKQVVNVLP…DVPNELMDLA (164 aa). A compositionally biased stretch (basic and acidic residues) spans 604-613; that stretch reads RFRANRDSRK. Disordered stretches follow at residues 604 to 640, 683 to 704, and 729 to 770; these read RFRANRDSRKGGKKSGKGKGGGGGGGGGSGARGRGRG, VSASSSNTPSNSAPSRGAPSSF, and LPAP…GWDR. The span at 621 to 635 shows a compositional bias: gly residues; sequence GKGGGGGGGGGSGAR. A compositionally biased stretch (low complexity) spans 683–697; it reads VSASSSNTPSNSAPS. A compositionally biased stretch (polar residues) spans 744–753; sequence TVENANPNPE. A compositionally biased stretch (basic and acidic residues) spans 754–770; it reads SSRDRTRERKRPSGWDR.

This sequence belongs to the DEAD box helicase family.

It carries out the reaction ATP + H2O = ADP + phosphate + H(+). This Oryza sativa subsp. japonica (Rice) protein is DEAD-box ATP-dependent RNA helicase 24.